The sequence spans 333 residues: T-cell surface glycoprotein CD1b (333 aa).

Residues 1–17 (MLLLPFQLLAVLFPGGN) form the signal peptide. The Extracellular segment spans residues 18-303 (SEHAFQGPTS…YWRNPTSIGS (286 aa)). Residues asparagine 38, asparagine 75, and asparagine 146 are each glycosylated (N-linked (GlcNAc...) asparagine). Disulfide bonds link cysteine 120–cysteine 184, cysteine 149–cysteine 163, and cysteine 224–cysteine 279. The Ig-like domain maps to 185-295 (PRYLLGVLNA…LEGQDIILYW (111 aa)). Asparagine 258 is a glycosylation site (N-linked (GlcNAc...) asparagine). The helical transmembrane segment at 304–324 (IVLAIIVPSLLLLLCLALWYM) threads the bilayer. Over 325–333 (RRRSYQNIP) the chain is Cytoplasmic. Residues 329-332 (YQNI) carry the Internalization signal motif.

As to quaternary structure, heterodimer with B2M (beta-2-microglobulin). Interacts with saposin C. Expressed on cortical thymocytes, on certain T-cell leukemias, and in various other tissues.

Its subcellular location is the cell membrane. It is found in the endosome membrane. The protein resides in the lysosome membrane. Antigen-presenting protein that binds self and non-self lipid and glycolipid antigens and presents them to T-cell receptors on natural killer T-cells. The sequence is that of T-cell surface glycoprotein CD1b (CD1B) from Homo sapiens (Human).